We begin with the raw amino-acid sequence, 238 residues long: MTAYKSGDPTTINRLYGRAKGKPLRQGQQALVDELLPQISMPAEGPITAEALFGEPRPLHFEIGFGGGEHMAFRADMLPDHGFIGAEPFLNGVAQALTHVSGDNGQHPPIPNVRIHHGDALEVLRRIPDGSLSFLYLLHPDPWPKARHAKRRMMNDGPVDLFAAKLRPGGEFRFGTDHAVYLRHALMVMRRHKHQFEWLAKDARDFQVRPGGWPETRYEHKARTVYGHEVWYFRFRRR.

4 residues coordinate S-adenosyl-L-methionine: Glu-62, Glu-87, Asp-119, and Asp-141. Asp-141 is a catalytic residue. Residues Lys-145, Asp-177, and 216-219 (TRYE) contribute to the substrate site.

Belongs to the class I-like SAM-binding methyltransferase superfamily. TrmB family.

The enzyme catalyses guanosine(46) in tRNA + S-adenosyl-L-methionine = N(7)-methylguanosine(46) in tRNA + S-adenosyl-L-homocysteine. Its pathway is tRNA modification; N(7)-methylguanine-tRNA biosynthesis. Catalyzes the formation of N(7)-methylguanine at position 46 (m7G46) in tRNA. This chain is tRNA (guanine-N(7)-)-methyltransferase, found in Novosphingobium aromaticivorans (strain ATCC 700278 / DSM 12444 / CCUG 56034 / CIP 105152 / NBRC 16084 / F199).